The following is an 814-amino-acid chain: Plakophilin-2 (814 aa).

The interval 1-329 (MAIPGSLGEC…MTLERAVNML (329 aa)) is required for binding to single-stranded DNA. Residue S44 is modified to Phosphoserine. R46 is modified (omega-N-methylarginine). Residues S82 and S130 each carry the phosphoserine modification. ARM repeat units lie at residues 200 to 240 (TCQH…SIKG), 309 to 352 (CDCL…ESFQ), 354 to 393 (SEAR…NLVF), 503 to 549 (PDGR…NLSY), 604 to 644 (PRGI…NLTA), 652 to 691 (SVAR…NLSR), 696 to 737 (QNEI…NLMQ), and 740 to 782 (YQNA…SLWA).

Belongs to the beta-catenin family. As to quaternary structure, interacts with DSC2. Interacts with JUP. Interacts with KRT5/CK5, KRT8/CK8, KRT14/CK14, KRT18/CK18 and VIM. Interacts (via N-terminus) with MARK3/C-TAK1. Interacts with DSP. Interacts with DSG1, DSG2 and DSG3. Interacts (via N-terminus) with CTNNB1. Interacts with CDH1. Interacts with the RNA polymerase III (Pol III) complex proteins POLR3A/RPC155, POLR3F/RPC39 and POLR3C/RPC82. Interacts with CTNNA3. Interacts (via N-terminus) with SCN5A/Nav1.5. Interacts with ANK3/ANKG and GJA1/CX43. In terms of tissue distribution, expressed in the heart (at protein level).

The protein localises to the nucleus. It is found in the cell junction. It localises to the desmosome. Its subcellular location is the cytoplasm. Functionally, a component of desmosome cell-cell junctions which are required for positive regulation of cellular adhesion. Regulates focal adhesion turnover resulting in changes in focal adhesion size, cell adhesion and cell spreading, potentially via transcriptional modulation of beta-integrins. Required to maintain gingival epithelial barrier function. Important component of the desmosome that is also required for localization of desmosome component proteins such as DSC2, DSG2 and JUP to the desmosome cell-cell junction. Required for the formation of desmosome cell junctions in cardiomyocytes, thereby required for the correct formation of the heart, specifically trabeculation and formation of the atria walls. Loss of desmosome cell junctions leads to mis-localization of DSP and DSG2 resulting in disruption of cell-cell adhesion and disordered intermediate filaments. Modulates profibrotic gene expression in cardiomyocytes via regulation of DSP expression and subsequent activation of downstream TGFB1 and MAPK14/p38 MAPK signaling. Required for cardiac sodium current propagation and electrical synchrony in cardiac myocytes, via ANK3 stabilization and modulation of SCN5A/Nav1.5 localization to cell-cell junctions. Required for mitochondrial function, nuclear envelope integrity and positive regulation of SIRT3 transcription via maintaining DES localization at its nuclear envelope and cell tip anchoring points, and thereby preserving regulation of the transcriptional program. Maintenance of nuclear envelope integrity protects against DNA damage and transcriptional dysregulation of genes, especially those involved in the electron transport chain, thereby preserving mitochondrial function and protecting against superoxide radical anion generation. Binds single-stranded DNA (ssDNA). May regulate the localization of GJA1 to gap junctions in intercalated disks of the heart. In Rattus norvegicus (Rat), this protein is Plakophilin-2.